Consider the following 1207-residue polypeptide: DNA-directed RNA polymerase subunit beta (1207 aa).

Belongs to the RNA polymerase beta chain family. The RNAP catalytic core consists of 2 alpha, 1 beta, 1 beta' and 1 omega subunit. When a sigma factor is associated with the core the holoenzyme is formed, which can initiate transcription.

It carries out the reaction RNA(n) + a ribonucleoside 5'-triphosphate = RNA(n+1) + diphosphate. Functionally, DNA-dependent RNA polymerase catalyzes the transcription of DNA into RNA using the four ribonucleoside triphosphates as substrates. The polypeptide is DNA-directed RNA polymerase subunit beta (Enterococcus faecalis (strain ATCC 700802 / V583)).